We begin with the raw amino-acid sequence, 1332 residues long: MTADELVFFVNGKKVVEKNADPETTLLAYLRRKLGLRGTKLGCGEGGCGACTVMLSKYDRLQDKIIHFSANACLAPICTLHHVAVTTVEGIGSTKTRLHPVQERIAKSHGSQCGFCTPGIVMSMYTLLRNQPEPTVEEIEDAFQGNLCRCTGYRPILQGFRTFAKNGGCCGGNGNNPNCCMNQKKDHTVTLSPSLFNPEEFMPLDPTQEPIFPPELLRLKDVPPKQLRFEGERVTWIQASTLKELLDLKAQHPEAKLVVGNTEIGIEMKFKNQLFPMIICPAWIPELNAVEHGPEGISFGAACALSSVEKTLLEAVAKLPTQKTEVFRGVLEQLRWFAGKQVKSVASLGGNIITASPISDLNPVFMASGTKLTIVSRGTRRTVPMDHTFFPSYRKTLLGPEEILLSIEIPYSREDEFFSAFKQASRREDDIAKVTCGMRVLFQPGSMQVKELALCYGGMADRTISALKTTQKQLSKFWNEKLLQDVCAGLAEELSLSPDAPGGMIEFRRTLTLSFFFKFYLTVLKKLGKDSKDKCGKLDPTYTSATLLFQKDPPANIQLFQEVPNGQSKEDTVGRPLPHLAAAMQASGEAVYCDDIPRYENELFLRLVTSTRAHAKIKSIDVSEAQKVPGFVCFLSADDIPGSNETGLFNDETVFAKDTVTCVGHIIGAVVADTPEHAERAAHVVKVTYEDLPAIITIEDAIKNNSFYGSELKIEKGDLKKGFSEADNVVSGELYIGGQDHFYLETHCTIAIPKGEEGEMELFVSTQNAMKTQSFVAKMLGVPVNRILVRVKRMGGGFGGKETRSTLVSVAVALAAYKTGHPVRCMLDRNEDMLITGGRHPFLARYKVGFMKTGTIVALEVDHYSNAGNSRDLSHSIMERALFHMDNCYKIPNIRGTGRLCKTNLSSNTAFRGFGGPQALFIAENWMSEVAVTCGLPAEEVRWKNMYKEGDLTHFNQRLEGFSVPRCWDECLKSSQYYARKSEVDKFNKENCWKKRGLCIIPTKFGISFTVPFLNQAGALIHVYTDGSVLVSHGGTEMGQGLHTKMVQVASKALKIPISKIYISETSTNTVPNSSPTAASVSTDIYGQAVYEACQTILKRLEPFKKKNPDGSWEDWVMAAYQDRVSLSTTGFYRTPNLGYSFETNSGNAFHYFTYGVACSEVEIDCLTGDHKNLRTDIVMDVGSSLNPAIDIGQVEGAFVQGLGLFTLEELHYSPEGSLHTRGPSTYKIPAFGSIPTEFRVSLLRDCPNKKAIYASKAVGEPPLFLGASVFFAIKDAIRAARAQHTNNNTKELFRLDSPATPEKIRNACVDKFTTLCVTGAPGNCKPWSLRV.

The 88-residue stretch at 4–91 (DELVFFVNGK…HVAVTTVEGI (88 aa)) folds into the 2Fe-2S ferredoxin-type domain. Residues Cys-43, Cys-48, Cys-51, Cys-73, Cys-113, Cys-116, Cys-148, and Cys-150 each coordinate [2Fe-2S] cluster. Positions 229–414 (FEGERVTWIQ…LSIEIPYSRE (186 aa)) constitute an FAD-binding PCMH-type domain. Residues 257–264 (LVVGNTEI), Phe-337, 347–351 (SLGGN), Asp-360, Leu-404, and Lys-422 each bind FAD. Cysteines 535 and 992 form a disulfide. The Mo-molybdopterin site is built by Gln-767 and Phe-798. 2 residues coordinate substrate: Glu-802 and Arg-880. Position 912 (Arg-912) interacts with Mo-molybdopterin. Substrate-binding residues include Phe-914 and Thr-1010. Ala-1079 contributes to the Mo-molybdopterin binding site. The active-site Proton acceptor is the Glu-1261.

Belongs to the xanthine dehydrogenase family. As to quaternary structure, homodimer. Interacts with BTN1A1. [2Fe-2S] cluster serves as cofactor. FAD is required as a cofactor. It depends on Mo-molybdopterin as a cofactor. Post-translationally, subject to partial proteolysis; this alters the enzyme from the dehydrogenase form (D) to the oxidase form (O). In terms of processing, contains sulfhydryl groups that are easily oxidized (in vitro); this alters the enzyme from the dehydrogenase form (D) to the oxidase form (O). In terms of tissue distribution, detected in milk (at protein level).

The protein resides in the cytoplasm. It is found in the peroxisome. Its subcellular location is the secreted. The catalysed reaction is xanthine + NAD(+) + H2O = urate + NADH + H(+). It carries out the reaction hypoxanthine + NAD(+) + H2O = xanthine + NADH + H(+). It catalyses the reaction xanthine + O2 + H2O = urate + H2O2. Its activity is regulated as follows. Can be converted from the dehydrogenase form (D) to the oxidase form (O) irreversibly by proteolysis or reversibly through the oxidation of sulfhydryl groups. Key enzyme in purine degradation. Catalyzes the oxidation of hypoxanthine to xanthine. Catalyzes the oxidation of xanthine to uric acid. Contributes to the generation of reactive oxygen species. The sequence is that of Xanthine dehydrogenase/oxidase (XDH) from Bos taurus (Bovine).